A 776-amino-acid chain; its full sequence is Isoamylase (776 aa).

The N-terminal stretch at 1–26 (MKCPKILAALLGCAVLAGVPAMPAHA) is a signal peptide. Residues D154, E255, T256, N258, and D285 each coordinate Ca(2+). D401 serves as the catalytic Nucleophile. A disulfide bridge connects residues C410 and C422. The Proton donor role is filled by E461. 2 disulfides stabilise this stretch: C546–C616 and C738–C766.

This sequence belongs to the glycosyl hydrolase 13 family. In terms of assembly, monomer. It depends on Ca(2+) as a cofactor.

Its subcellular location is the secreted. It carries out the reaction Hydrolysis of (1-&gt;6)-alpha-D-glucosidic branch linkages in glycogen, amylopectin and their beta-limit dextrins.. The protein is Isoamylase (iam) of Pseudomonas amyloderamosa.